Here is a 57-residue protein sequence, read N- to C-terminus: Large ribosomal subunit protein bL32 (57 aa).

A disordered region spans residues 1 to 38 (MAVQQNKPTRSKRGMRRSHDALTAVTSLSVDKTSGEKH).

The protein belongs to the bacterial ribosomal protein bL32 family.

This is Large ribosomal subunit protein bL32 from Escherichia coli O7:K1 (strain IAI39 / ExPEC).